A 107-amino-acid polypeptide reads, in one-letter code: Small ribosomal subunit protein bS18c (107 aa).

The segment covering 85–95 has biased composition (basic residues); that stretch reads KKAQRFKRRQS. The segment at 85 to 107 is disordered; the sequence is KKAQRFKRRQSTARTVGLRTRNK.

It belongs to the bacterial ribosomal protein bS18 family. Part of the 30S ribosomal subunit.

The protein resides in the plastid. It is found in the chloroplast. The sequence is that of Small ribosomal subunit protein bS18c from Oenothera argillicola (Appalachian evening primrose).